Here is a 119-residue protein sequence, read N- to C-terminus: Protein TusC (119 aa).

This sequence belongs to the DsrF/TusC family. As to quaternary structure, heterohexamer, formed by a dimer of trimers. The hexameric TusBCD complex contains 2 copies each of TusB, TusC and TusD. The TusBCD complex interacts with TusE.

The protein resides in the cytoplasm. Its function is as follows. Part of a sulfur-relay system required for 2-thiolation of 5-methylaminomethyl-2-thiouridine (mnm(5)s(2)U) at tRNA wobble positions. This chain is Protein TusC, found in Escherichia coli O157:H7.